A 321-amino-acid polypeptide reads, in one-letter code: MSKPIQMEKGVKYRDADKMALIPVKNMPTEKKEVLRKPEWMKIKLPSSSKRIDEIKSAMRKNNLHSVCEEASCPNLAECFNHGTATFMILGAICTRRCPFCDVAHGRPVTPEAEEPKKLAKTIKDMKLKYVVITSVDRDDLRDGGAQHFADCNREIRELNPEIRIETLVPDFRGRMDRALDAMHSNPPDVFNHNLETAPRLYRKVRPGANYQWSLDLLKKFKEQHPTVPTKSGVMMGLGETKEEIVEVLKDLRAHGVTMLTLGQYLAPSRHHLPVERYVPPAEFDELKVIALELGFTHAACGPFVRSSYHADLQAKGEEVK.

Residues Cys-68, Cys-73, Cys-79, Cys-94, Cys-98, Cys-101, and Ser-308 each contribute to the [4Fe-4S] cluster site. Residues Phe-80–Thr-297 enclose the Radical SAM core domain.

This sequence belongs to the radical SAM superfamily. Lipoyl synthase family. [4Fe-4S] cluster is required as a cofactor.

The protein localises to the cytoplasm. The catalysed reaction is [[Fe-S] cluster scaffold protein carrying a second [4Fe-4S](2+) cluster] + N(6)-octanoyl-L-lysyl-[protein] + 2 oxidized [2Fe-2S]-[ferredoxin] + 2 S-adenosyl-L-methionine + 4 H(+) = [[Fe-S] cluster scaffold protein] + N(6)-[(R)-dihydrolipoyl]-L-lysyl-[protein] + 4 Fe(3+) + 2 hydrogen sulfide + 2 5'-deoxyadenosine + 2 L-methionine + 2 reduced [2Fe-2S]-[ferredoxin]. It functions in the pathway protein modification; protein lipoylation via endogenous pathway; protein N(6)-(lipoyl)lysine from octanoyl-[acyl-carrier-protein]: step 2/2. Its function is as follows. Catalyzes the radical-mediated insertion of two sulfur atoms into the C-6 and C-8 positions of the octanoyl moiety bound to the lipoyl domains of lipoate-dependent enzymes, thereby converting the octanoylated domains into lipoylated derivatives. This Aliivibrio salmonicida (strain LFI1238) (Vibrio salmonicida (strain LFI1238)) protein is Lipoyl synthase.